We begin with the raw amino-acid sequence, 389 residues long: Na(+)/H(+) antiporter NhaA (389 aa).

Helical transmembrane passes span 14-34 (AGGI…NSPL), 59-79 (LILW…GLEV), 95-115 (SLPT…YLLF), 124-144 (AGWA…MALL), 154-174 (VFLL…IALF), 177-197 (TDLS…LVGL), 213-233 (LILW…GVII), 257-277 (PWST…VYVG), 292-312 (IALG…YIAV), 328-348 (IAPV…IASL), and 363-383 (LGTL…LSKV).

This sequence belongs to the NhaA Na(+)/H(+) (TC 2.A.33) antiporter family.

It is found in the cell inner membrane. The enzyme catalyses Na(+)(in) + 2 H(+)(out) = Na(+)(out) + 2 H(+)(in). Functionally, na(+)/H(+) antiporter that extrudes sodium in exchange for external protons. This chain is Na(+)/H(+) antiporter NhaA, found in Shewanella baltica (strain OS155 / ATCC BAA-1091).